Here is a 344-residue protein sequence, read N- to C-terminus: tRNA N6-adenosine threonylcarbamoyltransferase (344 aa).

Residues histidine 115 and histidine 119 each contribute to the Fe cation site. Substrate contacts are provided by residues 137-141 (LVSGG), aspartate 170, glycine 183, aspartate 187, and asparagine 276. Aspartate 306 serves as a coordination point for Fe cation.

It belongs to the KAE1 / TsaD family. Fe(2+) is required as a cofactor.

The protein localises to the cytoplasm. The catalysed reaction is L-threonylcarbamoyladenylate + adenosine(37) in tRNA = N(6)-L-threonylcarbamoyladenosine(37) in tRNA + AMP + H(+). Its function is as follows. Required for the formation of a threonylcarbamoyl group on adenosine at position 37 (t(6)A37) in tRNAs that read codons beginning with adenine. Is involved in the transfer of the threonylcarbamoyl moiety of threonylcarbamoyl-AMP (TC-AMP) to the N6 group of A37, together with TsaE and TsaB. TsaD likely plays a direct catalytic role in this reaction. The sequence is that of tRNA N6-adenosine threonylcarbamoyltransferase from Limosilactobacillus fermentum (strain NBRC 3956 / LMG 18251) (Lactobacillus fermentum).